Reading from the N-terminus, the 223-residue chain is DNA mismatch repair protein MutH (223 aa).

Belongs to the MutH family.

It is found in the cytoplasm. Its function is as follows. Sequence-specific endonuclease that cleaves unmethylated GATC sequences. It is involved in DNA mismatch repair. This chain is DNA mismatch repair protein MutH, found in Shewanella sp. (strain MR-7).